The chain runs to 490 residues: Apocarotenoid-15,15'-oxygenase (490 aa).

A Fe cation-binding site is contributed by His-183. Ser-206 lines the substrate pocket. Residue His-238 coordinates Fe cation. Phe-303 serves as a coordination point for substrate. His-304 and His-484 together coordinate Fe cation.

The protein belongs to the carotenoid oxygenase family. Fe(2+) is required as a cofactor.

The enzyme catalyses all-trans-8'-apo-beta-carotenal + O2 = (2E,4E,6E)-2,6-dimethylocta-2,4,6-trienedial + all-trans-retinal. Its function is as follows. Cleaves a number of carotenals and carotenols in the all-trans configuration at the 15-15' double bond producing retinal or retinol, respectively. Also shows activity toward lycopenals and the corresponding alcohols. Does not cleave beta-carotene or lycopene. This chain is Apocarotenoid-15,15'-oxygenase, found in Synechocystis sp. (strain ATCC 27184 / PCC 6803 / Kazusa).